Here is a 194-residue protein sequence, read N- to C-terminus: dCTP deaminase, dUMP-forming (194 aa).

DCTP contacts are provided by residues 104–109 (RSSLGR), Asp-122, 130–132 (TLE), Gln-151, Tyr-165, Lys-172, and Gln-176. Catalysis depends on Glu-132, which acts as the Proton donor/acceptor.

Belongs to the dCTP deaminase family. In terms of assembly, homotrimer.

It carries out the reaction dCTP + 2 H2O = dUMP + NH4(+) + diphosphate. It participates in pyrimidine metabolism; dUMP biosynthesis; dUMP from dCTP: step 1/1. Bifunctional enzyme that catalyzes both the deamination of dCTP to dUTP and the hydrolysis of dUTP to dUMP without releasing the toxic dUTP intermediate. This chain is dCTP deaminase, dUMP-forming, found in Dictyoglomus turgidum (strain DSM 6724 / Z-1310).